The primary structure comprises 219 residues: Small ribosomal subunit protein uS19 (219 aa).

Residues 1–128 form a unknown region; that stretch reads MGFKGAWNKR…YEEIYAQYKQ (128 aa). The tract at residues 129-219 is small ribosomal subunit protein uS19; that stretch reads MTEKKAYVDP…DKTAKVVKKK (91 aa).

It belongs to the universal ribosomal protein uS19 family.

Functionally, protein S19 forms a complex with S13 that binds strongly to the 16S ribosomal RNA. The chain is Small ribosomal subunit protein uS19 from Aquifex pyrophilus.